The following is a 536-amino-acid chain: Chorismate synthase (536 aa).

The active site involves His17. The tract at residues Glu37 to Glu59 is disordered. The active site involves His104. The interval Glu344–Arg377 is disordered. Residues Ser354–Arg377 are compositionally biased toward basic and acidic residues. The active site involves Asp489.

This sequence belongs to the chorismate synthase family. FMNH2 is required as a cofactor.

It carries out the reaction 5-O-(1-carboxyvinyl)-3-phosphoshikimate = chorismate + phosphate. The enzyme catalyses FMNH2 + NADP(+) = FMN + NADPH + 2 H(+). Its pathway is metabolic intermediate biosynthesis; chorismate biosynthesis; chorismate from D-erythrose 4-phosphate and phosphoenolpyruvate: step 7/7. Bifunctional chorismate synthase and flavin reductase. Catalyzes the conversion of 5-enolpyruvylshikimate 3-phosphate (EPSP) to form chorismate. Acts also as a flavin reductase (FR) able to generate reduced flavin mononucleotide in the presence of NADPH. This is Chorismate synthase (AROC) from Toxoplasma gondii.